The chain runs to 545 residues: Oligopeptide-binding protein OppA (545 aa).

The N-terminal stretch at 1-20 (MKKRWSIVTLMLIFTLVLSA) is a signal peptide. Cysteine 21 carries the N-palmitoyl cysteine lipid modification. Residue cysteine 21 is the site of S-diacylglycerol cysteine attachment. Threonine 470 is subject to Phosphothreonine.

The protein belongs to the bacterial solute-binding protein 5 family. The complex is composed of two ATP-binding proteins (OppD and OppF), two transmembrane proteins (OppB and OppC) and a solute-binding protein (OppA). OppA interacts with FloT in detergent-resistant membranes (DRM). Colocalizes rarely with FloT membrane assemblies.

It localises to the cell membrane. The protein localises to the membrane raft. In terms of biological role, part of the ABC transporter complex OppABCDF involved in the uptake of oligopeptides. Plays an important nutritional role. Binds peptides containing up to five amino acids residues regardless of their sequence, with highest affinity for tetra- and pentapeptides. Binds to the sporulation-promoting peptide PhrE (Ser-Arg-Asn-Val-Thr). Required for sporulation and genetic competence. The sequence is that of Oligopeptide-binding protein OppA from Bacillus subtilis (strain 168).